We begin with the raw amino-acid sequence, 232 residues long: Large ribosomal subunit protein uL1 (232 aa).

This sequence belongs to the universal ribosomal protein uL1 family. Part of the 50S ribosomal subunit.

Binds directly to 23S rRNA. The L1 stalk is quite mobile in the ribosome, and is involved in E site tRNA release. Functionally, protein L1 is also a translational repressor protein, it controls the translation of the L11 operon by binding to its mRNA. The protein is Large ribosomal subunit protein uL1 of Stenotrophomonas maltophilia (strain K279a).